We begin with the raw amino-acid sequence, 77 residues long: ATP synthase subunit 9, mitochondrial (77 aa).

Transmembrane regions (helical) follow at residues 8-28 (MGAG…GNVL) and 45-72 (LFGY…LISF).

The protein belongs to the ATPase C chain family. In terms of assembly, F-type ATPases have 2 components, CF(1) - the catalytic core - and CF(0) - the membrane proton channel. CF(1) has five subunits: alpha(3), beta(3), gamma(1), delta(1), epsilon(1). CF(0) has three main subunits: a, b and c.

The protein resides in the mitochondrion membrane. In terms of biological role, this protein is one of the chains of the nonenzymatic membrane component (F0) of mitochondrial ATPase. The polypeptide is ATP synthase subunit 9, mitochondrial (ATP9) (Petunia sp. (Petunia)).